The following is a 413-amino-acid chain: Peptidase T (413 aa).

His-81 serves as a coordination point for Zn(2+). Asp-83 is a catalytic residue. Zn(2+) is bound at residue Asp-143. Catalysis depends on Glu-178, which acts as the Proton acceptor. Zn(2+) is bound by residues Glu-179, Asp-201, and His-383.

The protein belongs to the peptidase M20B family. In terms of assembly, homodimer. The cofactor is Zn(2+).

Its subcellular location is the cytoplasm. It carries out the reaction Release of the N-terminal residue from a tripeptide.. Inhibited by EDTA, by the reducing agents dithiothreitol and 13-mercaptoethanol, and by the divalent cation Cu(2+). Cleaves the N-terminal amino acid of tripeptides. Has a broad specificity for tripeptides with no clear preference for a particular tripeptide. Tripeptides with proline in the second position are an exception and are not hydrolyzed. Does not hydrolyze dipeptides, tetrapeptides, or oligopeptides. The chain is Peptidase T (pepT) from Lactococcus lactis subsp. cremoris (Streptococcus cremoris).